A 634-amino-acid chain; its full sequence is tRNA uridine 5-carboxymethylaminomethyl modification enzyme MnmG (634 aa).

13-18 (GAGHAG) is an FAD binding site. 273-287 (GPRYCPSIEDKIIKF) is a binding site for NAD(+).

Belongs to the MnmG family. As to quaternary structure, homodimer. Heterotetramer of two MnmE and two MnmG subunits. Requires FAD as cofactor.

Its subcellular location is the cytoplasm. Its function is as follows. NAD-binding protein involved in the addition of a carboxymethylaminomethyl (cmnm) group at the wobble position (U34) of certain tRNAs, forming tRNA-cmnm(5)s(2)U34. The protein is tRNA uridine 5-carboxymethylaminomethyl modification enzyme MnmG of Buchnera aphidicola subsp. Cinara cedri (strain Cc).